A 175-amino-acid polypeptide reads, in one-letter code: MLTSGIVILSGGLLDPNPGLIFWTAVTFVIVLLILKKFAWGPILGALEEREKAIQSSIDRAHTAKDEAEAALRKNKELLTKADAEAEKILREGKEYGEKLRADIVEKAHSEATKMISSAKEEIEQEKRRALDELRNEVADLAVQGAEKILMANLDADKQKAIVSSMIQDLSKHRN.

A helical transmembrane segment spans residues 20–40 (LIFWTAVTFVIVLLILKKFAW).

The protein belongs to the ATPase B chain family. As to quaternary structure, F-type ATPases have 2 components, F(1) - the catalytic core - and F(0) - the membrane proton channel. F(1) has five subunits: alpha(3), beta(3), gamma(1), delta(1), epsilon(1). F(0) has four main subunits: a(1), b(2) and c(10-14). The alpha and beta chains form an alternating ring which encloses part of the gamma chain. F(1) is attached to F(0) by a central stalk formed by the gamma and epsilon chains, while a peripheral stalk is formed by the delta and b chains.

The protein localises to the cell inner membrane. Its function is as follows. F(1)F(0) ATP synthase produces ATP from ADP in the presence of a proton or sodium gradient. F-type ATPases consist of two structural domains, F(1) containing the extramembraneous catalytic core and F(0) containing the membrane proton channel, linked together by a central stalk and a peripheral stalk. During catalysis, ATP synthesis in the catalytic domain of F(1) is coupled via a rotary mechanism of the central stalk subunits to proton translocation. Functionally, component of the F(0) channel, it forms part of the peripheral stalk, linking F(1) to F(0). The protein is ATP synthase subunit b 2 of Prosthecochloris aestuarii (strain DSM 271 / SK 413).